We begin with the raw amino-acid sequence, 505 residues long: N-succinylglutamate 5-semialdehyde dehydrogenase (505 aa).

Position 234 to 239 (234 to 239 (GSAHTG)) interacts with NAD(+). Active-site residues include Glu-257 and Cys-291.

This sequence belongs to the aldehyde dehydrogenase family. AstD subfamily.

The enzyme catalyses N-succinyl-L-glutamate 5-semialdehyde + NAD(+) + H2O = N-succinyl-L-glutamate + NADH + 2 H(+). The protein operates within amino-acid degradation; L-arginine degradation via AST pathway; L-glutamate and succinate from L-arginine: step 4/5. Catalyzes the NAD-dependent reduction of succinylglutamate semialdehyde into succinylglutamate. This chain is N-succinylglutamate 5-semialdehyde dehydrogenase, found in Yersinia pestis bv. Antiqua (strain Antiqua).